A 477-amino-acid polypeptide reads, in one-letter code: Glutamate--tRNA ligase 1 (477 aa).

Residues 12 to 22 (PSPTGALHLGN) carry the 'HIGH' region motif. A 'KMSKS' region motif is present at residues 253–257 (PLSKR). Lysine 256 provides a ligand contact to ATP.

Belongs to the class-I aminoacyl-tRNA synthetase family. Glutamate--tRNA ligase type 1 subfamily. As to quaternary structure, monomer.

It localises to the cytoplasm. The enzyme catalyses tRNA(Glu) + L-glutamate + ATP = L-glutamyl-tRNA(Glu) + AMP + diphosphate. Functionally, catalyzes the attachment of glutamate to tRNA(Glu) in a two-step reaction: glutamate is first activated by ATP to form Glu-AMP and then transferred to the acceptor end of tRNA(Glu). This is Glutamate--tRNA ligase 1 from Halorhodospira halophila (strain DSM 244 / SL1) (Ectothiorhodospira halophila (strain DSM 244 / SL1)).